A 217-amino-acid chain; its full sequence is Large ribosomal subunit protein uL3 (217 aa).

Gln152 carries the post-translational modification N5-methylglutamine.

It belongs to the universal ribosomal protein uL3 family. As to quaternary structure, part of the 50S ribosomal subunit. Forms a cluster with proteins L14 and L19. Post-translationally, methylated by PrmB.

One of the primary rRNA binding proteins, it binds directly near the 3'-end of the 23S rRNA, where it nucleates assembly of the 50S subunit. This is Large ribosomal subunit protein uL3 from Blochmanniella pennsylvanica (strain BPEN).